Here is a 525-residue protein sequence, read N- to C-terminus: Protein translocase subunit SecD (525 aa).

6 helical membrane passes run 9–29, 368–388, 392–412, 415–435, 460–480, and 487–507; these read LYLVVLVALGSIYYALPSLLG, VLIGGVLVVLFMVLYYKGFGM, LAVVLNVTILVSLLALMQATL, PGIAGAVLLLGMAVDANVLIF, FSTILDANITTLITAVILYQF, and GFAVTLSVGLLASMFTAIFVT.

This sequence belongs to the SecD/SecF family. SecD subfamily. As to quaternary structure, forms a complex with SecF. Part of the essential Sec protein translocation apparatus which comprises SecA, SecYEG and auxiliary proteins SecDF-YajC and YidC.

The protein localises to the cell inner membrane. Part of the Sec protein translocase complex. Interacts with the SecYEG preprotein conducting channel. SecDF uses the proton motive force (PMF) to complete protein translocation after the ATP-dependent function of SecA. This is Protein translocase subunit SecD from Magnetococcus marinus (strain ATCC BAA-1437 / JCM 17883 / MC-1).